The following is a 470-amino-acid chain: Sulfate adenylyltransferase subunit 1 (470 aa).

Residues 22 to 236 enclose the tr-type G domain; the sequence is KELLRFITCG…YLETIKIDYA (215 aa). The segment at 31-38 is G1; it reads GSVDDGKS. Residue 31 to 38 coordinates GTP; it reads GSVDDGKS. The G2 stretch occupies residues 89 to 93; that stretch reads GITID. The tract at residues 110-113 is G3; sequence DTPG. GTP-binding positions include 110–114 and 165–168; these read DTPGH and NKMD. Positions 165 to 168 are G4; the sequence is NKMD. The G5 stretch occupies residues 202–204; the sequence is SAL.

It belongs to the TRAFAC class translation factor GTPase superfamily. Classic translation factor GTPase family. CysN/NodQ subfamily. In terms of assembly, heterodimer composed of CysD, the smaller subunit, and CysN.

The catalysed reaction is sulfate + ATP + H(+) = adenosine 5'-phosphosulfate + diphosphate. It participates in sulfur metabolism; hydrogen sulfide biosynthesis; sulfite from sulfate: step 1/3. Its function is as follows. With CysD forms the ATP sulfurylase (ATPS) that catalyzes the adenylation of sulfate producing adenosine 5'-phosphosulfate (APS) and diphosphate, the first enzymatic step in sulfur assimilation pathway. APS synthesis involves the formation of a high-energy phosphoric-sulfuric acid anhydride bond driven by GTP hydrolysis by CysN coupled to ATP hydrolysis by CysD. This is Sulfate adenylyltransferase subunit 1 from Francisella tularensis subsp. novicida (strain U112).